Here is a 360-residue protein sequence, read N- to C-terminus: Iron uptake protein A1 (360 aa).

Positions 1–28 (MVQKLSRRLFLSIGTAFTVVVGSQLLSS) are cleaved as a signal peptide. Residue cysteine 29 is the site of N-palmitoyl cysteine attachment. The S-diacylglycerol cysteine moiety is linked to residue cysteine 29. The Fe cation site is built by histidine 54, tyrosine 55, tyrosine 185, tyrosine 241, and tyrosine 242.

This sequence belongs to the bacterial solute-binding protein 1 family.

The protein localises to the cellular thylakoid membrane. It is found in the cell membrane. Plays an important role in protecting the acceptor side of photosystem II (PSII) against oxidative damage, especially under iron-limiting growth conditions. The differing subcellular locations of futA1 (predominantly thylakoid lumen) and futA2 (predominantly periplasmic) suggest they may fulfill different roles. Functionally, a major iron-binding protein involved in Fe(3+) uptake, probably part of a periplasmic ABC transporter complex futA1A2BC (TC 3.A.1.10.2) involved in Fe(3+) ion import (ferric iron). This protein and futA2 (slr0531) may be subunit proteins that have redundant or overlapping substrate-binding functions. This chain is Iron uptake protein A1 (futA1), found in Synechocystis sp. (strain ATCC 27184 / PCC 6803 / Kazusa).